Reading from the N-terminus, the 218-residue chain is Ras-related protein RabT2 (218 aa).

Residue 32–39 (GDYKTGKG) participates in GTP binding. The short motif at 54 to 61 (VSSIGVDF) is the Effector region element. GTP is bound by residues 80–84 (DANSC) and 140–143 (NKCD). Cysteine 215 is modified (cysteine methyl ester). Cysteine 215 carries S-geranylgeranyl cysteine lipidation. Residues 216–218 (NIL) constitute a propeptide, removed in mature form.

The protein belongs to the small GTPase superfamily. Rab family.

It localises to the cell membrane. This is Ras-related protein RabT2 (rabT2) from Dictyostelium discoideum (Social amoeba).